A 513-amino-acid polypeptide reads, in one-letter code: Putative ADP-ribosyl glycohydrolase L444 (513 aa).

Positions 1–23 (MSDKIQSRESKTTKPTKTEKISD) are enriched in basic and acidic residues. Residues 1–33 (MSDKIQSRESKTTKPTKTEKISDKSGNLSQVKS) are disordered. A compositionally biased stretch (polar residues) spans 24-33 (KSGNLSQVKS).

The protein belongs to the ADP-ribosylglycohydrolase family.

The protein is Putative ADP-ribosyl glycohydrolase L444 of Acanthamoeba polyphaga mimivirus (APMV).